Consider the following 336-residue polypeptide: MGHPLLLPLLLLLLHTGVPASWGLRCMQCNGHGNCRVEECALGQNLCRTTSVRHWEEGEEVEMVEKSCTHSEKTNRTMSFRTGVRITTLTEAVCGLDLCNQDSSGPAVTFPRSRFLECISCGSSDMSCERGRHQSLQCTSPKEQCLDMVTHRTSEAEEGRPKDDHHIRGCGHLPGCPGIAGFHSEDTFHFLKCCNTTKCNGGPILSLANLPKNGHRCYSCQGNSTHGCSSENTVLTDCRGPMNQCLEATGIYEPLSESYMVRGCATSSMCQHDHVSDAFSMSHIDVACCTENDCNNPAEDIQHRSEAAPQPGPAHLSLTITGLMTARLWGGTLLWT.

The signal sequence occupies residues 1-23 (MGHPLLLPLLLLLLHTGVPASWG). UPAR/Ly6 domains are found at residues 24 to 111 (LRCM…VTFP), 116 to 208 (LECI…LSLA), and 215 to 302 (HRCY…EDIQ). 3 disulfides stabilise this stretch: Cys-26–Cys-47, Cys-29–Cys-35, and Cys-40–Cys-68. N-linked (GlcNAc...) asparagine glycosylation is present at Asn-75. 11 disulfides stabilise this stretch: Cys-94–Cys-99, Cys-118–Cys-145, Cys-121–Cys-128, Cys-138–Cys-170, Cys-176–Cys-193, Cys-194–Cys-199, Cys-217–Cys-245, Cys-220–Cys-228, Cys-238–Cys-264, Cys-270–Cys-288, and Cys-289–Cys-294. 2 N-linked (GlcNAc...) asparagine glycosylation sites follow: Asn-195 and Asn-223.

In terms of assembly, monomer. Interacts (via the UPAR/Ly6 domains) with SRPX2. Interacts with MRC2. Interacts with FAP (seprase); the interaction occurs at the cell surface of invadopodia membrane. Interacts with SORL1 (via N-terminal ectodomain); this interaction decreases PLAUR internalization. The ternary complex composed of PLAUR-PLAU-SERPINE1 also interacts with SORL1.

It localises to the cell membrane. It is found in the cell projection. Its subcellular location is the invadopodium membrane. Its function is as follows. Acts as a receptor for urokinase plasminogen activator. Plays a role in localizing and promoting plasmin formation. Mediates the proteolysis-independent signal transduction activation effects of U-PA. It is subject to negative-feedback regulation by U-PA which cleaves it into an inactive form. The polypeptide is Urokinase plasminogen activator surface receptor (PLAUR) (Aotus trivirgatus (Three-striped night monkey)).